An 89-amino-acid chain; its full sequence is 10 kDa fusion protein (89 aa).

Positions 1 to 29 are disordered; that stretch reads MDENDGENLLTQPDDTGNSTNGVYAAGAP. Over residues 9–22 the composition is skewed to polar residues; it reads LLTQPDDTGNSTNG. N-linked (GlcNAc...) asparagine; by host glycosylation occurs at N18.

It belongs to the poxviruses fusion protein family. As to quaternary structure, homotrimer, covalently linked.

It is found in the virion membrane. This Capra hircus (Goat) protein is 10 kDa fusion protein.